Here is a 403-residue protein sequence, read N- to C-terminus: N-isopropylammelide isopropyl amidohydrolase (403 aa).

Zn(2+) is bound by residues H60, H62, and H217. The Proton donor/acceptor role is filled by H249. D303 contacts Zn(2+).

This sequence belongs to the metallo-dependent hydrolases superfamily. N-acyl-D-amino-acid deacylase family. As to quaternary structure, homotetramer. Zn(2+) is required as a cofactor.

It localises to the cytoplasm. It catalyses the reaction N-isopropylammelide + H2O + H(+) = isopropylamine + cyanurate. It functions in the pathway xenobiotic degradation; atrazine degradation; cyanurate from atrazine: step 3/3. Its activity is regulated as follows. Inhibited by N-ethylammeline, N-hydroxyethylammeline, N-isopropylammeline, ammeline and 2-amino-4hydroxy-1,3,5-s-triazine. Functionally, transforms N-isopropylammelide to cyanuric acid and isopropylamine. The sequence is that of N-isopropylammelide isopropyl amidohydrolase (atzC) from Pseudomonas sp. (strain ADP).